The following is a 509-amino-acid chain: ATP synthase subunit alpha (509 aa).

Residue 169–176 (GDRQTGKT) coordinates ATP.

Belongs to the ATPase alpha/beta chains family. In terms of assembly, F-type ATPases have 2 components, CF(1) - the catalytic core - and CF(0) - the membrane proton channel. CF(1) has five subunits: alpha(3), beta(3), gamma(1), delta(1), epsilon(1). CF(0) has four main subunits: a(1), b(1), b'(1) and c(9-12).

Its subcellular location is the cell inner membrane. The catalysed reaction is ATP + H2O + 4 H(+)(in) = ADP + phosphate + 5 H(+)(out). Produces ATP from ADP in the presence of a proton gradient across the membrane. The alpha chain is a regulatory subunit. This Bradyrhizobium sp. (strain BTAi1 / ATCC BAA-1182) protein is ATP synthase subunit alpha.